The chain runs to 169 residues: Menaquinol:cytochrome c reductase iron-sulfur subunit (169 aa).

Residues 62–160 form the Rieske domain; sequence EPKRFDFKVK…FEVKDGKLYL (99 aa). Cys102, His104, Cys123, and His126 together coordinate [2Fe-2S] cluster. Residues Cys107 and Cys125 are joined by a disulfide bond.

This sequence belongs to the Rieske iron-sulfur protein family. As to quaternary structure, the main subunits of the menaquinol:cytochrome c complex are a Rieske-type iron-sulfur protein (QcrA), a cytochrome b (QcrB) and a cytochrome c (QcrC). It depends on [2Fe-2S] cluster as a cofactor.

Component of the menaquinol:cytochrome c reductase complex. The Rieske protein is a high potential 2Fe-2S protein. The chain is Menaquinol:cytochrome c reductase iron-sulfur subunit (qcrA) from Geobacillus thermodenitrificans.